The following is a 258-amino-acid chain: MKQKVYRLLIDTQEAWPFERTRIPSFKKLSDSERQQIERYYFDMDAKMALASILIKRHLVSTALECSPNEVQISVTKAGRPYCQSAHCPPIIFDFNVSHYGGIVIVVGAWLPSDPSGMRPINIGVDIVECKPLAFEASWMEDFMSVFTPCEWKLIKSSISSIDVFFLLWTCKEAILKALGIGLSGNPLDIVVTFHKLNELLNSEEVSLRRAATAVYSGYSWDLEIHKLILHSSTFYVSVAFPQDCVIMDLNWETLNDL.

The protein belongs to the P-Pant transferase superfamily. AcpS family.

The protein resides in the cytoplasm. Its subcellular location is the nucleus. The catalysed reaction is apo-[ACP] + CoA = holo-[ACP] + adenosine 3',5'-bisphosphate + H(+). In terms of biological role, catalyzes the transfer of a 4'-phosphopantetheine moiety from coenzyme A to a serine residue of acceptor proteins, such as alpha-aminoadipate reductase. Necessary for alpha-aminoadipate reductase activity. In Schizosaccharomyces pombe (strain 972 / ATCC 24843) (Fission yeast), this protein is L-aminoadipate-semialdehyde dehydrogenase-phosphopantetheinyl transferase (lys7).